Reading from the N-terminus, the 166-residue chain is Putative 4-hydroxy-4-methyl-2-oxoglutarate aldolase 2 (166 aa).

Alanine 2 is modified (N-acetylalanine). Residues 81-84 and arginine 103 each bind substrate; that span reads GGNP. Residue aspartate 104 coordinates a divalent metal cation.

This sequence belongs to the class II aldolase/RraA-like family. As to quaternary structure, homotrimer. A divalent metal cation is required as a cofactor.

The enzyme catalyses 4-hydroxy-4-methyl-2-oxoglutarate = 2 pyruvate. It carries out the reaction oxaloacetate + H(+) = pyruvate + CO2. Its function is as follows. Catalyzes the aldol cleavage of 4-hydroxy-4-methyl-2-oxoglutarate (HMG) into 2 molecules of pyruvate. Also contains a secondary oxaloacetate (OAA) decarboxylase activity due to the common pyruvate enolate transition state formed following C-C bond cleavage in the retro-aldol and decarboxylation reactions. The chain is Putative 4-hydroxy-4-methyl-2-oxoglutarate aldolase 2 from Arabidopsis thaliana (Mouse-ear cress).